A 428-amino-acid polypeptide reads, in one-letter code: tRNA modification GTPase MnmE (428 aa).

Residues R20, E76, and R116 each coordinate (6S)-5-formyl-5,6,7,8-tetrahydrofolate. The TrmE-type G domain maps to 212 to 351 (GFEVAIVGAP…LVAAIGERLL (140 aa)). K(+) is bound at residue N222. GTP contacts are provided by residues 222-227 (NAGKST), 241-247 (SEIAGTT), and 266-269 (DTAG). S226 provides a ligand contact to Mg(2+). K(+) is bound by residues S241, I243, and T246. Mg(2+) is bound at residue T247. K428 contacts (6S)-5-formyl-5,6,7,8-tetrahydrofolate.

It belongs to the TRAFAC class TrmE-Era-EngA-EngB-Septin-like GTPase superfamily. TrmE GTPase family. As to quaternary structure, homodimer. Heterotetramer of two MnmE and two MnmG subunits. K(+) is required as a cofactor.

Its subcellular location is the cytoplasm. Exhibits a very high intrinsic GTPase hydrolysis rate. Involved in the addition of a carboxymethylaminomethyl (cmnm) group at the wobble position (U34) of certain tRNAs, forming tRNA-cmnm(5)s(2)U34. The chain is tRNA modification GTPase MnmE from Cereibacter sphaeroides (strain ATCC 17029 / ATH 2.4.9) (Rhodobacter sphaeroides).